The sequence spans 751 residues: uncharacterized protein (751 aa).

Positions 73 to 169 are disordered; that stretch reads FGVVHSHTPK…PVLIDDDTGE (97 aa). The span at 96–109 shows a compositional bias: low complexity; that stretch reads ATSTRRSATAQRAA. Over residues 111 to 120 the composition is skewed to polar residues; it reads LKSSPVDQWS.

This is an uncharacterized protein from Invertebrate iridescent virus 3 (IIV-3).